The sequence spans 139 residues: ATP synthase epsilon chain (139 aa).

This sequence belongs to the ATPase epsilon chain family. F-type ATPases have 2 components, CF(1) - the catalytic core - and CF(0) - the membrane proton channel. CF(1) has five subunits: alpha(3), beta(3), gamma(1), delta(1), epsilon(1). CF(0) has three main subunits: a, b and c.

The protein resides in the cell membrane. Its function is as follows. Produces ATP from ADP in the presence of a proton gradient across the membrane. The sequence is that of ATP synthase epsilon chain from Roseiflexus sp. (strain RS-1).